The chain runs to 144 residues: 3-dehydroquinate dehydratase (144 aa).

The Proton acceptor role is filled by tyrosine 22. Asparagine 71, histidine 77, and aspartate 84 together coordinate substrate. Residue histidine 97 is the Proton donor of the active site. Substrate-binding positions include 98–99 and arginine 108; that span reads IS.

The protein belongs to the type-II 3-dehydroquinase family. As to quaternary structure, homododecamer.

It catalyses the reaction 3-dehydroquinate = 3-dehydroshikimate + H2O. It functions in the pathway metabolic intermediate biosynthesis; chorismate biosynthesis; chorismate from D-erythrose 4-phosphate and phosphoenolpyruvate: step 3/7. Its function is as follows. Catalyzes a trans-dehydration via an enolate intermediate. The protein is 3-dehydroquinate dehydratase (aroQ) of Thermotoga maritima (strain ATCC 43589 / DSM 3109 / JCM 10099 / NBRC 100826 / MSB8).